The primary structure comprises 147 residues: Prefoldin subunit alpha 2 (147 aa).

Belongs to the prefoldin subunit alpha family. Heterohexamer of two alpha and four beta subunits.

It is found in the cytoplasm. Functionally, molecular chaperone capable of stabilizing a range of proteins. Seems to fulfill an ATP-independent, HSP70-like function in archaeal de novo protein folding. The sequence is that of Prefoldin subunit alpha 2 (pfdA2) from Methanocaldococcus jannaschii (strain ATCC 43067 / DSM 2661 / JAL-1 / JCM 10045 / NBRC 100440) (Methanococcus jannaschii).